Reading from the N-terminus, the 54-residue chain is ATP synthase F(0) complex subunit 8 (54 aa).

The helical transmembrane segment at 9–29 threads the bilayer; the sequence is WFMILFFSWVIFLTIIPTKII. A disordered region spans residues 35 to 54; it reads NDPTQVDAKEHKNDTWNWPW.

This sequence belongs to the ATPase protein 8 family. As to quaternary structure, component of the ATP synthase complex composed at least of ATP5F1A/subunit alpha, ATP5F1B/subunit beta, ATP5MC1/subunit c (homooctomer), MT-ATP6/subunit a, MT-ATP8/subunit 8, ATP5ME/subunit e, ATP5MF/subunit f, ATP5MG/subunit g, ATP5MK/subunit k, ATP5MJ/subunit j, ATP5F1C/subunit gamma, ATP5F1D/subunit delta, ATP5F1E/subunit epsilon, ATP5PF/subunit F6, ATP5PB/subunit b, ATP5PD/subunit d, ATP5PO/subunit OSCP. ATP synthase complex consists of a soluble F(1) head domain (subunits alpha(3) and beta(3)) - the catalytic core - and a membrane F(0) domain - the membrane proton channel (subunits c, a, 8, e, f, g, k and j). These two domains are linked by a central stalk (subunits gamma, delta, and epsilon) rotating inside the F1 region and a stationary peripheral stalk (subunits F6, b, d, and OSCP).

It localises to the mitochondrion membrane. Functionally, subunit 8, of the mitochondrial membrane ATP synthase complex (F(1)F(0) ATP synthase or Complex V) that produces ATP from ADP in the presence of a proton gradient across the membrane which is generated by electron transport complexes of the respiratory chain. ATP synthase complex consist of a soluble F(1) head domain - the catalytic core - and a membrane F(1) domain - the membrane proton channel. These two domains are linked by a central stalk rotating inside the F(1) region and a stationary peripheral stalk. During catalysis, ATP synthesis in the catalytic domain of F(1) is coupled via a rotary mechanism of the central stalk subunits to proton translocation. In vivo, can only synthesize ATP although its ATP hydrolase activity can be activated artificially in vitro. Part of the complex F(0) domain. This Danio rerio (Zebrafish) protein is ATP synthase F(0) complex subunit 8.